The chain runs to 432 residues: Succinate--CoA ligase [GDP-forming] subunit beta, mitochondrial (432 aa).

A mitochondrion-targeting transit peptide spans 1–37 (MAAPVGAQARKLLRDLVLRPPLLAARSQVVQLTSRRW). Positions 46–274 (KKLMSDNGVK…NAEFRQKDIF (229 aa)) constitute an ATP-grasp domain. Glutamine 57 is a GTP binding site. An N6-acetyllysine modification is found at lysine 73. Position 78 is an N6-succinyllysine (lysine 78). 90 to 92 (GRG) contacts GTP. An N6-acetyllysine mark is found at lysine 111, lysine 132, and lysine 139. Leucine 146 contacts GTP. Serine 161 carries the post-translational modification Phosphoserine. Residues lysine 200, lysine 218, and lysine 227 each carry the N6-acetyllysine modification. Mg(2+)-binding residues include asparagine 243 and aspartate 257. N6-acetyllysine is present on lysine 271. Asparagine 308 is a substrate binding site. The residue at position 338 (lysine 338) is an N6-succinyllysine. Residue lysine 347 is modified to N6-acetyllysine. 365–367 (GIV) contributes to the substrate binding site. Residues lysine 386 and lysine 423 each carry the N6-acetyllysine modification.

Belongs to the succinate/malate CoA ligase beta subunit family. GTP-specific subunit beta subfamily. In terms of assembly, heterodimer of an alpha and a beta subunit. The beta subunit determines specificity for GTP. The cofactor is Mg(2+).

The protein localises to the mitochondrion. It catalyses the reaction GTP + succinate + CoA = succinyl-CoA + GDP + phosphate. It participates in carbohydrate metabolism; tricarboxylic acid cycle; succinate from succinyl-CoA (ligase route): step 1/1. GTP-specific succinyl-CoA synthetase functions in the citric acid cycle (TCA), coupling the hydrolysis of succinyl-CoA to the synthesis of GTP and thus represents the only step of substrate-level phosphorylation in the TCA. The beta subunit provides nucleotide specificity of the enzyme and binds the substrate succinate, while the binding sites for coenzyme A and phosphate are found in the alpha subunit. This chain is Succinate--CoA ligase [GDP-forming] subunit beta, mitochondrial, found in Bos taurus (Bovine).